The sequence spans 329 residues: Phosphate import ATP-binding protein PstB (329 aa).

The 243-residue stretch at 83 to 325 (FEIRNFNFWY…PKQKATNSYI (243 aa)) folds into the ABC transporter domain. 116-123 (GKSGCGKS) serves as a coordination point for ATP.

It belongs to the ABC transporter superfamily. Phosphate importer (TC 3.A.1.7) family. The complex is composed of two ATP-binding proteins (PstB), two transmembrane proteins (PstC and PstA) and a solute-binding protein (PstS).

The protein resides in the cell membrane. It carries out the reaction phosphate(out) + ATP + H2O = ADP + 2 phosphate(in) + H(+). In terms of biological role, part of the ABC transporter complex PstSACB involved in phosphate import. Responsible for energy coupling to the transport system. The sequence is that of Phosphate import ATP-binding protein PstB from Mycoplasma genitalium (strain ATCC 33530 / DSM 19775 / NCTC 10195 / G37) (Mycoplasmoides genitalium).